A 495-amino-acid chain; its full sequence is Pre-glycoprotein polyprotein GP complex (495 aa).

A lipid anchor (N-myristoyl glycine; by host) is attached at Gly-2. The Extracellular portion of the chain corresponds to 2–17; the sequence is GQFISFMQEIPIFLQE. A helical membrane pass occupies residues 18 to 33; that stretch reads ALNIALVAVSLICIVK. Residues 34–58 lie on the Cytoplasmic side of the membrane; the sequence is GLVNLYRCGLFQLMVFLVLAGRSCS. Cys-57 is a binding site for Zn(2+). Residues 59-434 lie on the Extracellular side of the membrane; it reads EETFKIGMHT…QGRTPITLVD (376 aa). Intrachain disulfides connect Cys-92-Cys-236, Cys-281-Cys-294, Cys-303-Cys-312, and Cys-366-Cys-387. N-linked (GlcNAc...) asparagine; by host glycosylation is found at Asn-95 and Asn-188. N-linked (GlcNAc...) asparagine; by host glycosylation is found at Asn-367, Asn-375, Asn-392, and Asn-397. Residues 435-455 traverse the membrane as a helical segment; it reads ICFWSTVFFTSTLFLHLIGFP. At 456–495 the chain is on the cytoplasmic side; that stretch reads THEHIRGEGCPLPHRLNSMGGCRCGKYLPLKKPTIWHRRH. Zn(2+) contacts are provided by His-457, His-459, Cys-465, His-469, Cys-477, Cys-479, and His-495.

It belongs to the arenaviridae GPC protein family. In terms of assembly, interacts with glycoprotein G2. Part of the GP complex (GP-C) together with glycoprotein G1 and glycoprotein G2. The GP-complex interacts with protein Z, which interacts with ribonucleocapsid; these interactions may induce virion budding. As to quaternary structure, homotrimer; disulfide-linked. In pre-fusion state, G1 homotrimers bind G2 homotrimers via ionic interactions. Part of the GP complex (GP-C) together with glycoprotein G2 and the stable signal peptide. The GP-complex interacts with protein Z, which interacts with ribonucleocapsid; these interactions may induce virion budding. Homotrimer. Interacts with the stable signal peptide. In pre-fusion state, G2 homotrimers bind G1 homotrimers via ionic interactions. Part of the GP complex (GP-C) together with glycoprotein G1 and the stable signal peptide. Acidification in the endosome triggers rearrangements, which ultimately leads to a 6 helix bundle formed by the two heptad repeat domains (HR1 and HR2) in post-fusion state. The GP-complex interacts with protein Z, which interacts with ribonucleocapsid; these interactions may induce virion budding. Specific enzymatic cleavages in vivo yield mature proteins. GP-C polyprotein is cleaved in the endoplasmic reticulum by the host protease MBTPS1. Only cleaved glycoprotein is incorporated into virions. Post-translationally, the SSP remains stably associated with the GP complex following cleavage by signal peptidase and plays crucial roles in the trafficking of GP through the secretory pathway. In terms of processing, myristoylation is necessary for GP2-mediated fusion activity.

It is found in the virion membrane. It localises to the host endoplasmic reticulum membrane. The protein resides in the host Golgi apparatus membrane. The protein localises to the host cell membrane. Its function is as follows. Functions as a cleaved signal peptide that is retained as the third component of the GP complex (GP-C). Helps to stabilize the spike complex in its native conformation. The SSP is required for efficient glycoprotein expression, post-translational maturation cleavage of G1 and G2, glycoprotein transport to the cell surface plasma membrane, formation of infectious virus particles, and acid pH-dependent glycoprotein-mediated cell fusion. Functionally, forms the virion spikes together with glycoprotein G2. The glycoprotein spike trimers are connected to the underlying matrix. Interacts with the host receptor leading to virus endocytosis. Forms the virion spikes together with glycoprotein G1. The glycoprotein spike trimers are connected to the underlying matrix. Class I viral fusion protein that directs fusion of viral and host endosomal membranes, leading to delivery of the nucleocapsid into the cytoplasm. Membrane fusion is mediated by irreversible conformational changes induced by acidification. The sequence is that of Pre-glycoprotein polyprotein GP complex from Tacaribe virus (strain Franze-Fernandez) (TCRV).